Here is a 151-residue protein sequence, read N- to C-terminus: uncharacterized protein (151 aa).

Positions Met6–Leu143 constitute a Nudix hydrolase domain.

This is an uncharacterized protein from Escherichia coli (Bacteriophage T4).